The primary structure comprises 159 residues: Transcriptional repressor NrdR (159 aa).

The segment at 1–26 (MRCPFCAHDNSQVKDSRPSEDNTSIR) is disordered. The segment at 3–34 (CPFCAHDNSQVKDSRPSEDNTSIRRRRQCEGC) is a zinc-finger region. Basic and acidic residues predominate over residues 11-24 (SQVKDSRPSEDNTS). Residues 49–139 (VVVVKSGERR…VYRDFTEARD (91 aa)) enclose the ATP-cone domain.

This sequence belongs to the NrdR family. The cofactor is Zn(2+).

Its function is as follows. Negatively regulates transcription of bacterial ribonucleotide reductase nrd genes and operons by binding to NrdR-boxes. The sequence is that of Transcriptional repressor NrdR from Novosphingobium aromaticivorans (strain ATCC 700278 / DSM 12444 / CCUG 56034 / CIP 105152 / NBRC 16084 / F199).